Reading from the N-terminus, the 345-residue chain is tRNA-specific 2-thiouridylase MnmA (345 aa).

ATP-binding positions include 6-13 and leucine 32; that span reads AMSGGVDS. Catalysis depends on cysteine 100, which acts as the Nucleophile. Residues cysteine 100 and cysteine 197 are joined by a disulfide bond. ATP is bound at residue glycine 124. Positions 146-148 are interaction with tRNA; the sequence is RDQ. Cysteine 197 (cysteine persulfide intermediate) is an active-site residue.

The protein belongs to the MnmA/TRMU family.

It localises to the cytoplasm. The enzyme catalyses S-sulfanyl-L-cysteinyl-[protein] + uridine(34) in tRNA + AH2 + ATP = 2-thiouridine(34) in tRNA + L-cysteinyl-[protein] + A + AMP + diphosphate + H(+). Catalyzes the 2-thiolation of uridine at the wobble position (U34) of tRNA, leading to the formation of s(2)U34. The polypeptide is tRNA-specific 2-thiouridylase MnmA (Acidiphilium cryptum (strain JF-5)).